Reading from the N-terminus, the 322-residue chain is Pantothenate kinase (322 aa).

101 to 108 (GSVAVGKS) provides a ligand contact to ATP.

Belongs to the prokaryotic pantothenate kinase family.

The protein localises to the cytoplasm. It catalyses the reaction (R)-pantothenate + ATP = (R)-4'-phosphopantothenate + ADP + H(+). It functions in the pathway cofactor biosynthesis; coenzyme A biosynthesis; CoA from (R)-pantothenate: step 1/5. This chain is Pantothenate kinase, found in Psychromonas ingrahamii (strain DSM 17664 / CCUG 51855 / 37).